The primary structure comprises 215 residues: MSTGITIALSKGRILQEAIPLFAGAGIHLAEDPEESRKLIIPSTDPTVRFLVIRASDVPTYVTWGAADVGIAGKDVLLEQEGLDLYEPLDLRIGICHMAVAEPAAMAADDAPQSWERVRIATKYPHITRHYFHSRGVQTEIIKLYGSMELAPLVGLADRIVDLVSSGRTLKENGLVEVEEIMPISSRLVVNRAAMKLKRRAIETLIRQLEAQVTP.

This sequence belongs to the ATP phosphoribosyltransferase family. Short subfamily. As to quaternary structure, heteromultimer composed of HisG and HisZ subunits.

It is found in the cytoplasm. It catalyses the reaction 1-(5-phospho-beta-D-ribosyl)-ATP + diphosphate = 5-phospho-alpha-D-ribose 1-diphosphate + ATP. Its pathway is amino-acid biosynthesis; L-histidine biosynthesis; L-histidine from 5-phospho-alpha-D-ribose 1-diphosphate: step 1/9. In terms of biological role, catalyzes the condensation of ATP and 5-phosphoribose 1-diphosphate to form N'-(5'-phosphoribosyl)-ATP (PR-ATP). Has a crucial role in the pathway because the rate of histidine biosynthesis seems to be controlled primarily by regulation of HisG enzymatic activity. The chain is ATP phosphoribosyltransferase from Acidithiobacillus ferrooxidans (strain ATCC 23270 / DSM 14882 / CIP 104768 / NCIMB 8455) (Ferrobacillus ferrooxidans (strain ATCC 23270)).